The primary structure comprises 564 residues: Septin-9 (564 aa).

Met1 bears the N-acetylmethionine mark. A Phosphoserine modification is found at Ser12. Phosphothreonine occurs at positions 24 and 31. 2 disordered regions span residues 38 to 165 and 178 to 224; these read VASS…PVTD and PAEA…DSEV. An N6-acetyllysine modification is found at Lys44. 3 positions are modified to phosphoserine: Ser64, Ser67, and Ser71. A compositionally biased stretch (polar residues) spans 95-109; sequence DISSKQVESTASTPG. The span at 116–134 shows a compositional bias: basic and acidic residues; sequence KRAEVLGHKTPEPVPRRTE. The residue at position 125 (Thr125) is a Phosphothreonine. Residues 190–203 are compositionally biased toward polar residues; sequence TLENSEAPMSQLQS. Tyr258 is subject to Phosphotyrosine. One can recognise a Septin-type G domain in the interval 275–546; sequence QGFEFNIMVV…EAYRVKRLNE (272 aa). The tract at residues 285-292 is G1 motif; that stretch reads GQSGLGKS. 285–292 contacts GTP; sequence GQSGLGKS. Residues Ser307 and Ser312 each carry the phosphoserine modification. Residues Thr319, Gly345, 425–433, Gly480, and Arg495 each bind GTP; that span reads KADTLTLEE. The segment at 342–345 is G3 motif; that stretch reads DTPG. The segment at 424-427 is G4 motif; it reads AKAD.

The protein belongs to the TRAFAC class TrmE-Era-EngA-EngB-Septin-like GTPase superfamily. Septin GTPase family. In terms of assembly, septins polymerize into heterooligomeric protein complexes that form filaments, and associate with cellular membranes, actin filaments, and microtubules. GTPase activity is required for filament formation. Interacts with SEPTIN2, SEPTIN6, SEPTIN7, SEPTIN11 and SEPTIN14. Interacts with RTKN and ARHGEF18. As to expression, expressed in the brain, mainly in the perikarya and processes of astrocytes in the cerebellum, dentate gyrus and corpus callosum (at protein level). In the sciatic nerve, highly expressed in Schwann cells (at protein level). Isoforms are differentially expressed in testes, kidney, liver, heart, spleen and brain. Undetectable in skeletal muscle.

The protein resides in the cytoplasm. It localises to the cytoskeleton. Filament-forming cytoskeletal GTPase. May play a role in cytokinesis (Potential). The protein is Septin-9 of Rattus norvegicus (Rat).